A 144-amino-acid chain; its full sequence is UPF0102 protein Veis_0630 (144 aa).

The interval Pro-11–Arg-31 is disordered.

The protein belongs to the UPF0102 family.

The polypeptide is UPF0102 protein Veis_0630 (Verminephrobacter eiseniae (strain EF01-2)).